A 272-amino-acid polypeptide reads, in one-letter code: Phosphatidylglycerol--prolipoprotein diacylglyceryl transferase (272 aa).

4 consecutive transmembrane segments (helical) span residues 21–41 (IAVH…IFVA), 60–80 (YIWW…VLFY), 101–121 (GVYA…FIIA), and 131–151 (VSFW…YIFG). Arginine 152 serves as a coordination point for a 1,2-diacyl-sn-glycero-3-phospho-(1'-sn-glycerol). Helical transmembrane passes span 181 to 201 (PSQI…LAFY), 209 to 229 (GQLA…AEFF), and 244 to 264 (LTMG…FYVV).

This sequence belongs to the Lgt family.

The protein localises to the cell inner membrane. The enzyme catalyses L-cysteinyl-[prolipoprotein] + a 1,2-diacyl-sn-glycero-3-phospho-(1'-sn-glycerol) = an S-1,2-diacyl-sn-glyceryl-L-cysteinyl-[prolipoprotein] + sn-glycerol 1-phosphate + H(+). It participates in protein modification; lipoprotein biosynthesis (diacylglyceryl transfer). Catalyzes the transfer of the diacylglyceryl group from phosphatidylglycerol to the sulfhydryl group of the N-terminal cysteine of a prolipoprotein, the first step in the formation of mature lipoproteins. This is Phosphatidylglycerol--prolipoprotein diacylglyceryl transferase from Aliarcobacter butzleri (strain RM4018) (Arcobacter butzleri).